An 800-amino-acid chain; its full sequence is Leukocyte receptor cluster member 8 homolog (800 aa).

5 disordered regions span residues 118–149, 175–229, 245–273, 335–394, and 407–519; these read NYQSMSSQSGQHQGNLAQPPVPGLEDSSMSYS, PCIQ…GFKF, SSEHHDNSAGQQQQQATHMHHPLQQPQQQ, TIDW…GRGS, and KESS…HGHG. Low complexity-rich tracts occupy residues 120–131 and 184–201; these read QSMSSQSGQHQG and NQSNPHSSSNQPNYSQQS. Residues 252 to 261 show a composition bias toward polar residues; the sequence is SAGQQQQQAT. The span at 338–352 shows a compositional bias: basic and acidic residues; the sequence is WSREPLPGKDGGKES. The span at 360–387 shows a compositional bias: polar residues; that stretch reads QTTLQTSHGSTITITQSPRGGGNSTNAA. Residues 409 to 418 are compositionally biased toward low complexity; it reads SSSSSSAGSR. Composition is skewed to basic residues over residues 419-433 and 508-519; these read SRSRSPSHSPHRRYR and EKRAARFQHGHG. The 165-residue stretch at 636–800 folds into the PCI domain; it reads DHEEFNQCQA…KLSLAVLPNI (165 aa).

The chain is Leukocyte receptor cluster member 8 homolog (leng8) from Xenopus laevis (African clawed frog).